We begin with the raw amino-acid sequence, 453 residues long: Enolase (453 aa).

Glutamine 163 provides a ligand contact to (2R)-2-phosphoglycerate. Residue glutamate 205 is the Proton donor of the active site. The Mg(2+) site is built by aspartate 258, glutamate 308, and aspartate 335. Residues lysine 360, arginine 389, serine 390, and lysine 411 each coordinate (2R)-2-phosphoglycerate. Lysine 360 functions as the Proton acceptor in the catalytic mechanism.

Belongs to the enolase family. Requires Mg(2+) as cofactor.

Its subcellular location is the cytoplasm. It localises to the secreted. The protein localises to the cell surface. The catalysed reaction is (2R)-2-phosphoglycerate = phosphoenolpyruvate + H2O. It participates in carbohydrate degradation; glycolysis; pyruvate from D-glyceraldehyde 3-phosphate: step 4/5. Catalyzes the reversible conversion of 2-phosphoglycerate (2-PG) into phosphoenolpyruvate (PEP). It is essential for the degradation of carbohydrates via glycolysis. This chain is Enolase, found in Mesoplasma florum (strain ATCC 33453 / NBRC 100688 / NCTC 11704 / L1) (Acholeplasma florum).